Reading from the N-terminus, the 146-residue chain is D-aminoacyl-tRNA deacylase (146 aa).

A Gly-cisPro motif, important for rejection of L-amino acids motif is present at residues 138–139 (GP).

Belongs to the DTD family. Homodimer.

It localises to the cytoplasm. It catalyses the reaction glycyl-tRNA(Ala) + H2O = tRNA(Ala) + glycine + H(+). The enzyme catalyses a D-aminoacyl-tRNA + H2O = a tRNA + a D-alpha-amino acid + H(+). In terms of biological role, an aminoacyl-tRNA editing enzyme that deacylates mischarged D-aminoacyl-tRNAs. Also deacylates mischarged glycyl-tRNA(Ala), protecting cells against glycine mischarging by AlaRS. Acts via tRNA-based rather than protein-based catalysis; rejects L-amino acids rather than detecting D-amino acids in the active site. By recycling D-aminoacyl-tRNA to D-amino acids and free tRNA molecules, this enzyme counteracts the toxicity associated with the formation of D-aminoacyl-tRNA entities in vivo and helps enforce protein L-homochirality. The chain is D-aminoacyl-tRNA deacylase from Xanthomonas oryzae pv. oryzae (strain MAFF 311018).